We begin with the raw amino-acid sequence, 87 residues long: Acyl-CoA-binding protein 2 (87 aa).

The region spanning 2-87 (VSQLFEEKAK…VDNLIAKYSS (86 aa)) is the ACB domain. An acyl-CoA-binding positions include 29–33 (YGLYK), K51, K55, and Y74.

Belongs to the ACBP family.

In terms of biological role, binds medium- and long-chain acyl-CoA esters with very high affinity and may function as an intracellular carrier of acyl-CoA esters. The chain is Acyl-CoA-binding protein 2 (ACB2) from Saccharomyces pastorianus (strain ATCC 76670 / Carlsberg bottom yeast no.2 / CBS 1503 / CLIB 180 / NBRC 10610 / NRRL Y-1525) (Saaz-type lager yeast).